The chain runs to 317 residues: Ribosomal protein L11 methyltransferase (317 aa).

S-adenosyl-L-methionine-binding residues include threonine 158, glycine 179, aspartate 201, and asparagine 244.

It belongs to the methyltransferase superfamily. PrmA family.

The protein localises to the cytoplasm. The enzyme catalyses L-lysyl-[protein] + 3 S-adenosyl-L-methionine = N(6),N(6),N(6)-trimethyl-L-lysyl-[protein] + 3 S-adenosyl-L-homocysteine + 3 H(+). Its function is as follows. Methylates ribosomal protein L11. The protein is Ribosomal protein L11 methyltransferase of Streptococcus pyogenes serotype M6 (strain ATCC BAA-946 / MGAS10394).